Here is an 842-residue protein sequence, read N- to C-terminus: Leucine--tRNA ligase (842 aa).

The short motif at 44–55 (PYPSANGLHVGH) is the 'HIGH' region element. A 'KMSKS' region motif is present at residues 619 to 623 (KMSKS). ATP is bound at residue lysine 622.

The protein belongs to the class-I aminoacyl-tRNA synthetase family.

Its subcellular location is the cytoplasm. The enzyme catalyses tRNA(Leu) + L-leucine + ATP = L-leucyl-tRNA(Leu) + AMP + diphosphate. In Borrelia turicatae (strain 91E135), this protein is Leucine--tRNA ligase.